Here is a 134-residue protein sequence, read N- to C-terminus: Photosystem II lipoprotein Psb27 (134 aa).

An N-terminal signal peptide occupies residues 1 to 24; sequence MSFLKNQLSRLLALILVVAIGLTA. Cys25 carries the N-palmitoyl cysteine lipid modification. Residue Cys25 is the site of S-diacylglycerol cysteine attachment.

The protein belongs to the Psb27 family. As to quaternary structure, monomer. Forms a complex with a monomeric, partially assembled PSII. This is probably the complex in which D1 is assembled and/or replaced. Present in 6-10% of PSII complexes; mostly in monomeric PSII. These PSII do not evolve oxygen, do not have an assembled calcium-manganese-oxide cluster. Psb27-containing PSII seem to be assembly intermediates; a wild-type strain includes the intrinsic membrane proteins, Psb27, Pbs28, substoichiometric amounts of PsbO and PsbQ but no PsbU or PsbV, while a ctpA deletion mutant includes the intrinsic membrane proteins (D1 as precursor), Psb27, a very low amount of PsbO and PsbQ, but no PsbU or PsbV. Small amounts of Psb27 interact with the lumenal domain of CP43 (psbC) in wild-type and a ctpA mutant. A small amount can also be detected in monomeric and trimeric photosystem I (PSI), possibly via association with PsaB.

The protein resides in the cellular thylakoid membrane. Its function is as follows. Plays a role in the repair and/or biogenesis of the calcium-manganese-oxide cluster on the lumenal face of the thylakoid membrane. Photosystem II (PSII) complexes containing this protein are monomeric, are assembly intermediates lacking the calcium-manganese-oxide cluster and miss some of the lumenal subunits. Probably blocks binding of some of the small lumenal subunits. This is Photosystem II lipoprotein Psb27 from Synechocystis sp. (strain ATCC 27184 / PCC 6803 / Kazusa).